A 209-amino-acid polypeptide reads, in one-letter code: dITP/XTP pyrophosphatase (209 aa).

7–12 serves as a coordination point for substrate; that stretch reads SSHGYK. The Proton acceptor role is filled by Asp-70. Asp-70 is a binding site for Mg(2+). Substrate is bound by residues Ser-71, 154 to 157, Lys-177, and 182 to 183; these read FGYD and HR.

This sequence belongs to the HAM1 NTPase family. As to quaternary structure, homodimer. Mg(2+) serves as cofactor.

It carries out the reaction XTP + H2O = XMP + diphosphate + H(+). The catalysed reaction is dITP + H2O = dIMP + diphosphate + H(+). It catalyses the reaction ITP + H2O = IMP + diphosphate + H(+). Its function is as follows. Pyrophosphatase that catalyzes the hydrolysis of nucleoside triphosphates to their monophosphate derivatives, with a high preference for the non-canonical purine nucleotides XTP (xanthosine triphosphate), dITP (deoxyinosine triphosphate) and ITP. Seems to function as a house-cleaning enzyme that removes non-canonical purine nucleotides from the nucleotide pool, thus preventing their incorporation into DNA/RNA and avoiding chromosomal lesions. The chain is dITP/XTP pyrophosphatase from Chlamydia muridarum (strain MoPn / Nigg).